The chain runs to 156 residues: SsrA-binding protein (156 aa).

Belongs to the SmpB family.

It localises to the cytoplasm. Required for rescue of stalled ribosomes mediated by trans-translation. Binds to transfer-messenger RNA (tmRNA), required for stable association of tmRNA with ribosomes. tmRNA and SmpB together mimic tRNA shape, replacing the anticodon stem-loop with SmpB. tmRNA is encoded by the ssrA gene; the 2 termini fold to resemble tRNA(Ala) and it encodes a 'tag peptide', a short internal open reading frame. During trans-translation Ala-aminoacylated tmRNA acts like a tRNA, entering the A-site of stalled ribosomes, displacing the stalled mRNA. The ribosome then switches to translate the ORF on the tmRNA; the nascent peptide is terminated with the 'tag peptide' encoded by the tmRNA and targeted for degradation. The ribosome is freed to recommence translation, which seems to be the essential function of trans-translation. This Clostridium perfringens (strain 13 / Type A) protein is SsrA-binding protein.